Here is a 328-residue protein sequence, read N- to C-terminus: Probable tRNA-dihydrouridine synthase (328 aa).

18 to 20 (PME) serves as a coordination point for FMN. Catalysis depends on Cys105, which acts as the Proton donor. FMN contacts are provided by residues Lys143, 208–210 (NGD), and 232–233 (GR).

The protein belongs to the Dus family. The cofactor is FMN.

It catalyses the reaction a 5,6-dihydrouridine in tRNA + NAD(+) = a uridine in tRNA + NADH + H(+). It carries out the reaction a 5,6-dihydrouridine in tRNA + NADP(+) = a uridine in tRNA + NADPH + H(+). Catalyzes the synthesis of 5,6-dihydrouridine (D), a modified base found in the D-loop of most tRNAs, via the reduction of the C5-C6 double bond in target uridines. This is Probable tRNA-dihydrouridine synthase (dus) from Staphylococcus aureus (strain MRSA252).